A 523-amino-acid polypeptide reads, in one-letter code: 2-isopropylmalate synthase (523 aa).

The Pyruvate carboxyltransferase domain maps to V5 to H267. D14, H202, H204, and N238 together coordinate Mn(2+). The segment at G392–V523 is regulatory domain.

It belongs to the alpha-IPM synthase/homocitrate synthase family. LeuA type 1 subfamily. In terms of assembly, homodimer. Requires Mn(2+) as cofactor.

It localises to the cytoplasm. It carries out the reaction 3-methyl-2-oxobutanoate + acetyl-CoA + H2O = (2S)-2-isopropylmalate + CoA + H(+). It functions in the pathway amino-acid biosynthesis; L-leucine biosynthesis; L-leucine from 3-methyl-2-oxobutanoate: step 1/4. Catalyzes the condensation of the acetyl group of acetyl-CoA with 3-methyl-2-oxobutanoate (2-ketoisovalerate) to form 3-carboxy-3-hydroxy-4-methylpentanoate (2-isopropylmalate). The protein is 2-isopropylmalate synthase of Shewanella loihica (strain ATCC BAA-1088 / PV-4).